A 366-amino-acid chain; its full sequence is Inactive protein RESTRICTED TEV MOVEMENT 2 (366 aa).

One can recognise a sHSP domain in the interval 14–121 (VQYEDFVPKS…LPETSRTEAA (108 aa)). One copy of the A-1 repeat lies at 129–133 (LEEKR). Residues 129 to 220 (LEEKRLLEES…LEERRLEERK (92 aa)) form a 6 X 5 AA repeats A of L-E-E-[SKR]-[ERK] region. One copy of the A-2 repeat lies at 135 to 139 (LEESR). An A-3 repeat occupies 156 to 160 (LEEKE). One copy of the B-1 repeat lies at 163–176 (IRKLQEEAKAKEEA). A 3 X 14 AA repeats B of [IMA]-[RK]-K-L-Q-E-E-A-K-A-K-E-[EK]-[LA] region spans residues 163-206 (IRKLQEEAKAKEEAEMRKLQEEAKANEEAAAKKLQEEIEAKEKL). The stretch at 178-191 (MRKLQEEAKANEEA) is one B-2 repeat. The stretch at 193–205 (AKKLQEEIEAKEK) is one B-3 repeat. The stretch at 206–210 (LEERK) is one A-4 repeat. Residues 211 to 215 (LEERR) form an A-5 repeat. An A-6 repeat occupies 216–220 (LEERK). A helical transmembrane segment spans residues 322 to 342 (LMMNVGVAALVIFALGAYVSY). The disordered stretch occupies residues 345–366 (CSSSSSSSSSSPSSSSSSTKPE). Residues 346 to 366 (SSSSSSSSSSPSSSSSSTKPE) show a composition bias toward low complexity.

The protein belongs to the small heat shock protein (HSP20) family.

The protein resides in the cell membrane. Seems to not be involved in heat resistance. Unable to mediate restriction of long-distance movement of the pathogenic tobacco etch virus (TEV) without causing a hypersensitive response or inducing systemic acquired resistance. This is Inactive protein RESTRICTED TEV MOVEMENT 2 (RTM2) from Arabidopsis thaliana (Mouse-ear cress).